The sequence spans 427 residues: 3-phosphoshikimate 1-carboxyvinyltransferase (427 aa).

The 3-phosphoshikimate site is built by Lys-20, Ser-21, and Arg-25. Lys-20 contributes to the phosphoenolpyruvate binding site. Residues Gly-92 and Arg-120 each contribute to the phosphoenolpyruvate site. Residues Ser-166, Gln-168, Asp-312, and Lys-339 each contribute to the 3-phosphoshikimate site. Gln-168 lines the phosphoenolpyruvate pocket. The active-site Proton acceptor is Asp-312. Positions 343 and 385 each coordinate phosphoenolpyruvate.

This sequence belongs to the EPSP synthase family. In terms of assembly, monomer.

Its subcellular location is the cytoplasm. The catalysed reaction is 3-phosphoshikimate + phosphoenolpyruvate = 5-O-(1-carboxyvinyl)-3-phosphoshikimate + phosphate. The protein operates within metabolic intermediate biosynthesis; chorismate biosynthesis; chorismate from D-erythrose 4-phosphate and phosphoenolpyruvate: step 6/7. Functionally, catalyzes the transfer of the enolpyruvyl moiety of phosphoenolpyruvate (PEP) to the 5-hydroxyl of shikimate-3-phosphate (S3P) to produce enolpyruvyl shikimate-3-phosphate and inorganic phosphate. This chain is 3-phosphoshikimate 1-carboxyvinyltransferase, found in Streptococcus mutans serotype c (strain ATCC 700610 / UA159).